A 1140-amino-acid chain; its full sequence is Protein shank (1140 aa).

6 ANK repeats span residues 144–174 (QGETPLTLAAGIPNNRAVIVSLIGGGAHVDF), 178–207 (EGQTAMHKAAFLSSFENVKTLIELGASPNY), 211–242 (IGLTPLYYNMLTADSNDQVAEILLREAADIGV), 246–275 (HGNHEIHQACKNGLTKHVEHLLYFGGQIDA), 279–309 (NGNSPLHVCAVNNRPECARVLLFRGADHLAV), and 312–341 (QGQTALHVSHIVGNPGVADVVQAHNPKSSV). Residues 337 to 412 (PKSSVPYRGT…ITPSEYGTMR (76 aa)) are disordered. A compositionally biased stretch (basic residues) spans 351–364 (TRRRLSSTITRRRS). A compositionally biased stretch (low complexity) spans 388–412 (SAAPSPSPSRSSRTTITPSEYGTMR). The region spanning 436–529 (ILVIPRGVKG…TITLKVITVD (94 aa)) is the PDZ domain. 2 stretches are compositionally biased toward polar residues: residues 640-657 (DQESLNGGYSSKKYNSVS) and 687-704 (TSTFEYNCSSRSTPQLSR). Disordered regions lie at residues 640–673 (DQESLNGGYSSKKYNSVSDMKRRKGQRNVVASSA), 687–856 (TSTF…AASA), 875–902 (QLKKAEPRETSAASVSNNNNNNNNSTTD), 961–993 (KDSGYTSSRTSLEPSESEEKDHRPHFSLDHSPN), and 1008–1028 (YGQKDNMSVASSSTASSSSTV). Low complexity-rich tracts occupy residues 761 to 775 (QHQNHQNHQYQQQHP) and 784 to 793 (PQPIQQQQSS). Pro residues-rich tracts occupy residues 794 to 806 (IPPPPPPPPPPHC) and 823 to 847 (VPPPPPPLPPISSGAPPPPPPPPPG). The segment covering 964–974 (GYTSSRTSLEP) has biased composition (polar residues). Over residues 977-988 (SEEKDHRPHFSL) the composition is skewed to basic and acidic residues. Low complexity predominate over residues 1015–1028 (SVASSSTASSSSTV). The region spanning 1078 to 1140 (WSVDDVIGWL…IESALRGLLQ (63 aa)) is the SAM domain.

It belongs to the SHANK family. As to quaternary structure, interacts (via PDZ domain) with egl-19 (via C-terminus). As to expression, expressed in the pharynx, pharyngeal-intestinal valve, intestine, rectal epithelial cells, tail neurons, nerve cord and sperm.

The protein localises to the cell projection. It localises to the pseudopodium. Its subcellular location is the cytoplasmic vesicle. The protein resides in the postsynaptic density. In terms of biological role, scaffold protein that most likely acts in the postsynaptic density (PSD) of excitatory synapses which orchestrates synapse formation and maintenance at neuromuscular junctions. Associates with and trafficks the L-type calcium channel egl-19 to the cell surface of body wall muscles to ensure the function of the calcium channel and therefore maintain the Ca(2+) current density. The maintenance of Ca(2+) also allows for the downstream regulation of Ca(2+)-induced expression of genes such as gem-4. Plays a role in the regulation of the defecation cycle, and this may be in association with the inositol trisphosphate (IP3) receptor itr-1, which in turn mediates periodic calcium release and muscle contractions. Required for normal fertility and pharyngeal pumping. This is Protein shank from Caenorhabditis elegans.